The following is a 69-amino-acid chain: Probable Sec-independent protein translocase protein TatE (69 aa).

A helical transmembrane segment spans residues 1-21 (MEGISIAKLLVIGALIVLLFG). The tract at residues 45-69 (DDQPAAKSSAQDEHPAAISETRPKE) is disordered. Positions 54–69 (AQDEHPAAISETRPKE) are enriched in basic and acidic residues.

It belongs to the TatA/E family. TatE subfamily.

It localises to the cell inner membrane. Part of the twin-arginine translocation (Tat) system that transports large folded proteins containing a characteristic twin-arginine motif in their signal peptide across membranes. TatE shares overlapping functions with TatA. This chain is Probable Sec-independent protein translocase protein TatE, found in Dickeya chrysanthemi (strain Ech1591) (Dickeya zeae (strain Ech1591)).